A 364-amino-acid chain; its full sequence is tRNA/tmRNA (uracil-C(5))-methyltransferase (364 aa).

S-adenosyl-L-methionine-binding residues include Gln-188, Tyr-216, Asn-221, Glu-237, and Asp-297. The active-site Nucleophile is the Cys-322. Glu-356 acts as the Proton acceptor in catalysis.

This sequence belongs to the class I-like SAM-binding methyltransferase superfamily. RNA M5U methyltransferase family. TrmA subfamily.

It catalyses the reaction uridine(54) in tRNA + S-adenosyl-L-methionine = 5-methyluridine(54) in tRNA + S-adenosyl-L-homocysteine + H(+). The catalysed reaction is uridine(341) in tmRNA + S-adenosyl-L-methionine = 5-methyluridine(341) in tmRNA + S-adenosyl-L-homocysteine + H(+). Dual-specificity methyltransferase that catalyzes the formation of 5-methyluridine at position 54 (m5U54) in all tRNAs, and that of position 341 (m5U341) in tmRNA (transfer-mRNA). The polypeptide is tRNA/tmRNA (uracil-C(5))-methyltransferase (Colwellia psychrerythraea (strain 34H / ATCC BAA-681) (Vibrio psychroerythus)).